We begin with the raw amino-acid sequence, 462 residues long: MDYSYDEDLDELCPVCGDKVSGYHYGLLTCESCKGFFKRTVQNNKHYTCTESQSCKIDKTQRKRCPFCRFQKCLTVGMRLEAVRADRMRGGRNKFGPMYKRDRALKQQKKAQIRANGFKLETGPPMGVPPPPPPPPDYMLPPSLHAPEPKALVSGPPSGPLGDFGAPSLPMAVPGPHGPLAGYLYPAFSNRTIKSEYPEPYASPPQQPGPPYSYPEPFSGGPNVPELILQLLQLEPEEDQVRARIVGCLQEPAKSRPDQPAPFSLLCRMADQTFISIVDWARRCMVFKELEVADQMTLLQNCWSELLVLDHIYRQVQYGKEDSILLVTGQEVELSTVAVQAGSLLHSLVLRAQELVLQLHALQLDRQEFVCLKFLILFSLDVKFLNNHSLVKDAQEKANAALLDYTLCHYPHCGDKFQQLLLCLVEVRALSMQAKEYLYHKHLGNEMPRNNLLIEMLQAKQT.

The segment at residues 10-85 (DELCPVCGDK…VGMRLEAVRA (76 aa)) is a DNA-binding region (nuclear receptor). The segment at 13–33 (CPVCGDKVSGYHYGLLTCESC) adopts an NR C4-type zinc-finger fold. N6-acetyllysine occurs at positions 34, 38, and 72. The NR C4-type zinc finger occupies 49–73 (CTESQSCKIDKTQRKRCPFCRFQKC). Positions 117–149 (GFKLETGPPMGVPPPPPPPPDYMLPPSLHAPEP) are disordered. A Glycyl lysine isopeptide (Lys-Gly) (interchain with G-Cter in SUMO) cross-link involves residue Lys-119. The span at 126 to 139 (MGVPPPPPPPPDYM) shows a compositional bias: pro residues. Lys-194 participates in a covalent cross-link: Glycyl lysine isopeptide (Lys-Gly) (interchain with G-Cter in SUMO). At Ser-203 the chain carries Phosphoserine; by CDK7. Residues 223-460 (NVPELILQLL…NLLIEMLQAK (238 aa)) form the NR LBD domain. The a 1,2-diacyl-sn-glycero-3-phosphocholine site is built by Gly-342, Tyr-437, and Lys-441.

This sequence belongs to the nuclear hormone receptor family. NR5 subfamily. In terms of assembly, binds DNA as a monomer. Part of a complex consisting of SFPQ, NONO and NR5A1. Interacts with NR0B2, NCOA2 and PPARGC1A. Interacts with DGKQ and CDK7. Binds to and activated by HIPK3. Post-translationally, acetylation stimulates the transcriptional activity. In terms of processing, sumoylation reduces CDK7-mediated phosphorylation on Ser-203. Phosphorylated on Ser-203 by CDK7. This phosphorylation promotes transcriptional activity.

The protein resides in the nucleus. Its function is as follows. Transcriptional activator. Seems to be essential for sexual differentiation and formation of the primary steroidogenic tissues. Binds to the Ad4 site found in the promoter region of steroidogenic P450 genes such as CYP11A, CYP11B and CYP21B. Also regulates the AMH/Muellerian inhibiting substance gene as well as the AHCH and STAR genes. 5'-YCAAGGYC-3' and 5'-RRAGGTCA-3' are the consensus sequences for the recognition by NR5A1. The SFPQ-NONO-NR5A1 complex binds to the CYP17 promoter and regulates basal and cAMP-dependent transcriptional activity. Binds phosphatidylcholine and phospholipids with a phosphatidylinositol (PI) headgroup, in particular PI(3,4)P2 and PI(3,4,5)P3. Activated by the phosphorylation of NR5A1 by HIPK3 leading to increased steroidogenic gene expression upon cAMP signaling pathway stimulation. The chain is Steroidogenic factor 1 (Nr5a1) from Rattus norvegicus (Rat).